A 454-amino-acid chain; its full sequence is Nitrogen assimilation regulatory protein NtrX (454 aa).

The region spanning 4–120 (DILIVDDEPD…RLVVITERAL (117 aa)) is the Response regulatory domain. A 4-aspartylphosphate modification is found at Asp-53. A Sigma-54 factor interaction domain is found at 141-367 (MVGRSSVIQQ…LRNNVERLLI (227 aa)). ATP contacts are provided by residues 169-176 (GPSGSGKE) and 229-238 (AHGGTLFLDE). A DNA-binding region (H-T-H motif) is located at residues 430 to 449 (ISRTAEFVGMERSALHRKLK).

Functionally, member of the two-component regulatory system NtrY/NtrX involved in the activation of nitrogen assimilatory genes such as GlnA. NtrX is probably phosphorylated by NtrY and interacts with sigma-54. The sequence is that of Nitrogen assimilation regulatory protein NtrX (ntrX) from Azorhizobium caulinodans (strain ATCC 43989 / DSM 5975 / JCM 20966 / LMG 6465 / NBRC 14845 / NCIMB 13405 / ORS 571).